Reading from the N-terminus, the 548-residue chain is MALTLLRGMRTPVSSGSNPGLFFAVLRPRLSRFTARAESAQATEPKAAPPPRSIQLATKEAAEQKTQGFEAVIGIETHVQLSTVTKAFCSCPYSYGAQPNSTVCPTCMGHPGTLPVLNEKVVECAVKLGLALNCEISMTSKFDRKQYFYPDLPKGYQISQFDIPIAKKGHVDLDLPVEFGGGHRKFGITRVHMEEDAGKLLHSESSSYSQVDLNRAGVPLLEIVSEPDMRTGIEAAEYGAELQRIVRYLGVSNGNMQEGSLRCDVNVSIRPVGQSEFGTKVEIKNMNSFSAINRAIDYEISRQILLHKEGQADQIVQETRLWDESSQKTFTMRKKEGLADYRYFPEPDLPEVVLTSDYINEISKSMPELPEAKRRRYENMGLSMQDVLFLANDDNIGHFYDSTLEHGADAKLAANWIMGDIAAYLKDEKVSIDEIKLTPLELSELIASIKNGTISGKIGKEILAELIAKGGTVKGVIEEKDLVQIADPAAIEAMVDKVIADNPKQLEQYRAGKTKLQGFFAGQVMKASKGKANPVLLNKILGEKLNAN.

Belongs to the GatB/GatE family. GatB subfamily. As to quaternary structure, subunit of the heterotrimeric GatCAB amidotransferase (AdT) complex, composed of A, B and C subunits.

It is found in the mitochondrion. The protein localises to the plastid. Its subcellular location is the chloroplast. It carries out the reaction L-glutamyl-tRNA(Gln) + L-glutamine + ATP + H2O = L-glutaminyl-tRNA(Gln) + L-glutamate + ADP + phosphate + H(+). In terms of biological role, allows the formation of correctly charged Gln-tRNA(Gln) through the transamidation of misacylated Glu-tRNA(Gln) in chloroplasts and mitochondria. The reaction takes place in the presence of glutamine and ATP through an activated gamma-phospho-Glu-tRNA(Gln). This Sorghum bicolor (Sorghum) protein is Glutamyl-tRNA(Gln) amidotransferase subunit B, chloroplastic/mitochondrial.